We begin with the raw amino-acid sequence, 519 residues long: UvrABC system protein C (519 aa).

A GIY-YIG domain is found at histidine 9 to isoleucine 87. Residues arginine 191–leucine 226 enclose the UVR domain.

It belongs to the UvrC family. In terms of assembly, interacts with UvrB in an incision complex.

It is found in the cytoplasm. In terms of biological role, the UvrABC repair system catalyzes the recognition and processing of DNA lesions. UvrC both incises the 5' and 3' sides of the lesion. The N-terminal half is responsible for the 3' incision and the C-terminal half is responsible for the 5' incision. This chain is UvrABC system protein C, found in Methanosarcina barkeri (strain Fusaro / DSM 804).